The sequence spans 597 residues: MSNSYQTQGYTVNNAGRRLVVDPITRIEGHMRCEVNIDEQNIITNAVSCGTMFRGLEIILQGRDPRDAWAFVERICGVCTGVHALASVYAIEDAIGIKVPDNANIIRNIMLATLWCHDHLVHFYQLAGMDWIDVLNALKADPRATSQLAQSLSAWPMSSPGYFFDVQNRLKKFVDGGQLGIFRNGYWGHPQYKLSPEANLMGFAHYLEALDFQREIIKIHTVFGGKNPHPNWIVGGMPCAINIDQSGAVGAVDMERLNLVQSIITRTADFINNVMVPDALAIGQFNKPWSQIGTGLSDKCVLSYGAFPDIANDFSAKSLLMPGGAVINGDFNNVMPVDLADQQQIQEFVDHAWYRYPDDQLGRHPFEGITEPWYNPGDVKGSDTDIQQLNEQERYSWIKAPRWRGHAMEVGPLARTLIAYHKGDAATIESVDRMMSALKLPLSGMQSTLGRILCRAHEAQWAVSKLQYFFDKLMTNLKNGNLATANTEKWEPASWPQQCRGIGFTEAPRGALGHWASIRDQKIDVYQCVVPTTWNASPRDPEGQIGAYEAALMGTQMAIPDQPLEILRTLHSFDPCLACSTHVLGDDGSELIAVQVR.

Residues cysteine 76, cysteine 79, cysteine 576, and cysteine 579 each coordinate Ni(2+).

The protein belongs to the [NiFe]/[NiFeSe] hydrogenase large subunit family. Heterodimer of a large and a small subunit. It depends on Ni(2+) as a cofactor.

It is found in the cell membrane. It carries out the reaction H2 + A = AH2. This is Hydrogenase-1 large chain (hyaB) from Citrobacter freundii.